Consider the following 277-residue polypeptide: Large ribosomal subunit protein uL2 (277 aa).

Positions 219-277 are disordered; that stretch reads TVRGSVMNPNDHPHGGGEGRSPIGHPSPRTPWGKPALGYKTRKNKKYSDRFIVKRRHDK.

It belongs to the universal ribosomal protein uL2 family. Part of the 50S ribosomal subunit. Forms a bridge to the 30S subunit in the 70S ribosome.

One of the primary rRNA binding proteins. Required for association of the 30S and 50S subunits to form the 70S ribosome, for tRNA binding and peptide bond formation. It has been suggested to have peptidyltransferase activity; this is somewhat controversial. Makes several contacts with the 16S rRNA in the 70S ribosome. This Clostridium botulinum (strain Okra / Type B1) protein is Large ribosomal subunit protein uL2.